Here is a 726-residue protein sequence, read N- to C-terminus: PWWP domain-containing protein 2 (726 aa).

Over residues 1–10 the composition is skewed to basic and acidic residues; it reads MSTESERIES. A disordered region spans residues 1–26; sequence MSTESERIESVSEANASSLEVGNDQM. Over residues 12–26 the composition is skewed to polar residues; it reads SEANASSLEVGNDQM. The PWWP domain occupies 199–260; the sequence is DSDLVWAKVR…ASRIKPFRQH (62 aa). The disordered stretch occupies residues 392–441; the sequence is APKISPAEEQSSLVEVSDPEPTKSKQVYTKRRKTNLQTEQSSLVEVSDPD. Residues 426–435 show a composition bias toward polar residues; that stretch reads NLQTEQSSLV. Short sequence motifs (nuclear localization signal) lie at residues 460–467 and 495–502; these read KKKEKTLA and KKRKVVQS. Disordered stretches follow at residues 472–545 and 568–726; these read EKRV…PQKA and TRLL…VSAE. Residues 494-512 show a composition bias toward basic residues; it reads EKKRKVVQSKVPKSTKKIK. The span at 606–634 shows a compositional bias: polar residues; that stretch reads SPSTTLSSPHAASVTKTTSGKSNSVSLDH. Residues 658-688 show a composition bias toward basic and acidic residues; it reads LESRDLKDSSKEQVVHEDKKEAANVADEKSI.

Belongs to the PDP family. In terms of assembly, interacts with DEK3. Binds to MSI4/FVE and MSI5. Component of the PRC2 (polycomb repressive complex 2) complex which regulates histone methylation on histone H3K27.

Its subcellular location is the nucleus. In terms of biological role, together with PDP1, PDP3 and PDP6, interacts with MSI4/FVE and MSI5 to suppress FLC, MAF4 and MAF5 expression by regulating the function of the PRC2 complex and modulating H3K27me3 level, thereby promoting flowering. The chain is PWWP domain-containing protein 2 from Arabidopsis thaliana (Mouse-ear cress).